Reading from the N-terminus, the 618-residue chain is Dihydroxy-acid dehydratase (618 aa).

Residue Asp81 coordinates Mg(2+). Cys122 is a binding site for [2Fe-2S] cluster. Positions 123 and 124 each coordinate Mg(2+). Lys124 carries the N6-carboxylysine modification. Cys199 contributes to the [2Fe-2S] cluster binding site. Residue Glu495 participates in Mg(2+) binding. Residue Ser521 is the Proton acceptor of the active site.

Belongs to the IlvD/Edd family. In terms of assembly, homodimer. The cofactor is [2Fe-2S] cluster. Requires Mg(2+) as cofactor.

It carries out the reaction (2R)-2,3-dihydroxy-3-methylbutanoate = 3-methyl-2-oxobutanoate + H2O. The catalysed reaction is (2R,3R)-2,3-dihydroxy-3-methylpentanoate = (S)-3-methyl-2-oxopentanoate + H2O. It functions in the pathway amino-acid biosynthesis; L-isoleucine biosynthesis; L-isoleucine from 2-oxobutanoate: step 3/4. Its pathway is amino-acid biosynthesis; L-valine biosynthesis; L-valine from pyruvate: step 3/4. Functionally, functions in the biosynthesis of branched-chain amino acids. Catalyzes the dehydration of (2R,3R)-2,3-dihydroxy-3-methylpentanoate (2,3-dihydroxy-3-methylvalerate) into 2-oxo-3-methylpentanoate (2-oxo-3-methylvalerate) and of (2R)-2,3-dihydroxy-3-methylbutanoate (2,3-dihydroxyisovalerate) into 2-oxo-3-methylbutanoate (2-oxoisovalerate), the penultimate precursor to L-isoleucine and L-valine, respectively. The polypeptide is Dihydroxy-acid dehydratase (Blochmanniella floridana).